The primary structure comprises 515 residues: 3-[(3aS,4S,7aS)-7a-methyl-1,5-dioxo-octahydro-1H-inden-4-yl]propanoyl:CoA ligase (515 aa).

Residues 185–193, Asp-398, Arg-413, and Lys-504 each bind ATP; that span reads TSGTTGRSK.

The protein belongs to the ATP-dependent AMP-binding enzyme family.

It catalyses the reaction 3-[(3aS,4S,7aS)-7a-methyl-1,5-dioxo-octahydro-1H-inden-4-yl]propanoate + ATP + CoA = 3-[(3aS,4S,7aS)-7a-methyl-1,5-dioxo-octahydro-1H-inden-4-yl]propanoyl-CoA + AMP + diphosphate. Functionally, involved in the catabolism of the rings C and D of cholesterol. Catalyzes the ATP-dependent CoA thioesterification of 3aalpha-H-4alpha(3'-propanoate)-7abeta-methylhexahydro-1,5-indanedione (HIP). The chain is 3-[(3aS,4S,7aS)-7a-methyl-1,5-dioxo-octahydro-1H-inden-4-yl]propanoyl:CoA ligase from Rhodococcus jostii (strain RHA1).